The following is a 712-amino-acid chain: Sterol uptake control protein 2 (712 aa).

A compositionally biased stretch (polar residues) spans 1 to 19 (MMMTVKQESPNSTLNTSEF). The segment at 1–52 (MMMTVKQESPNSTLNTSEFSSDENLKTNNSEPPKKVSKSSTGKRKYHQKSRN) is disordered. A compositionally biased stretch (basic residues) spans 35-50 (KVSKSSTGKRKYHQKS). Residues 54-81 (CSTCKKRRVKCDEQRPVCGNCTKLKLDC) constitute a DNA-binding region (zn(2)-C6 fungal-type). Disordered regions lie at residues 95–150 (KKDI…VIPP) and 236–342 (TTVP…ANPL). Composition is skewed to polar residues over residues 113–143 (STVS…QDIK), 252–306 (RKSQ…SGSP), and 326–337 (KSLPNISPNMSI).

The protein resides in the nucleus. Transcription factor involved in the regulation of ergosterol biosynthetic genes such as ERG2 and ERG11 through direct binding to sterol response elements (SREs) in the promoters. Also binds to its own promoter on 2 cis-acting elements to promote autoregulation. Regulates sterol uptake across the plasma membrane. Acts as a major regulator of ascorbic acid-induced response. Plays a role in the triggering of pyroptosis, an inflammasome-mediated programmed cell death pathway in macrophages, allowing macrophages escaping. This Candida albicans (strain SC5314 / ATCC MYA-2876) (Yeast) protein is Sterol uptake control protein 2.